Here is a 101-residue protein sequence, read N- to C-terminus: Urease subunit beta (101 aa).

It belongs to the urease beta subunit family. Heterotrimer of UreA (gamma), UreB (beta) and UreC (alpha) subunits. Three heterotrimers associate to form the active enzyme.

The protein resides in the cytoplasm. It carries out the reaction urea + 2 H2O + H(+) = hydrogencarbonate + 2 NH4(+). It functions in the pathway nitrogen metabolism; urea degradation; CO(2) and NH(3) from urea (urease route): step 1/1. The sequence is that of Urease subunit beta from Mesorhizobium japonicum (strain LMG 29417 / CECT 9101 / MAFF 303099) (Mesorhizobium loti (strain MAFF 303099)).